Consider the following 351-residue polypeptide: Adenine deaminase (351 aa).

The Zn(2+) site is built by His-20, His-22, and His-200. The active-site Proton donor is the Glu-203. Zn(2+) is bound at residue Asp-281. Position 282 (Asp-282) interacts with substrate.

It belongs to the metallo-dependent hydrolases superfamily. Adenosine and AMP deaminases family. Adenine deaminase type 2 subfamily. Zn(2+) serves as cofactor.

The catalysed reaction is adenine + H2O + H(+) = hypoxanthine + NH4(+). In terms of biological role, catalyzes the hydrolytic deamination of adenine to hypoxanthine. Plays an important role in the purine salvage pathway and in nitrogen catabolism. This is Adenine deaminase from Cupriavidus pinatubonensis (strain JMP 134 / LMG 1197) (Cupriavidus necator (strain JMP 134)).